The primary structure comprises 144 residues: 3-hydroxyacyl-[acyl-carrier-protein] dehydratase FabZ (144 aa).

Residue H48 is part of the active site.

It belongs to the thioester dehydratase family. FabZ subfamily.

Its subcellular location is the cytoplasm. The catalysed reaction is a (3R)-hydroxyacyl-[ACP] = a (2E)-enoyl-[ACP] + H2O. In terms of biological role, involved in unsaturated fatty acids biosynthesis. Catalyzes the dehydration of short chain beta-hydroxyacyl-ACPs and long chain saturated and unsaturated beta-hydroxyacyl-ACPs. This chain is 3-hydroxyacyl-[acyl-carrier-protein] dehydratase FabZ, found in Bacillus licheniformis (strain ATCC 14580 / DSM 13 / JCM 2505 / CCUG 7422 / NBRC 12200 / NCIMB 9375 / NCTC 10341 / NRRL NRS-1264 / Gibson 46).